The chain runs to 404 residues: Cysteine desulfurase IscS (404 aa).

Pyridoxal 5'-phosphate contacts are provided by residues Ala-75–Thr-76, Asn-155, Gln-183, and Ser-203–His-205. The residue at position 206 (Lys-206) is an N6-(pyridoxal phosphate)lysine. A pyridoxal 5'-phosphate-binding site is contributed by Thr-243. Cys-328 acts as the Cysteine persulfide intermediate in catalysis. [2Fe-2S] cluster is bound at residue Cys-328.

The protein belongs to the class-V pyridoxal-phosphate-dependent aminotransferase family. NifS/IscS subfamily. In terms of assembly, homodimer. Forms a heterotetramer with IscU, interacts with other sulfur acceptors. It depends on pyridoxal 5'-phosphate as a cofactor.

It localises to the cytoplasm. The enzyme catalyses (sulfur carrier)-H + L-cysteine = (sulfur carrier)-SH + L-alanine. The protein operates within cofactor biosynthesis; iron-sulfur cluster biosynthesis. Master enzyme that delivers sulfur to a number of partners involved in Fe-S cluster assembly, tRNA modification or cofactor biosynthesis. Catalyzes the removal of elemental sulfur and selenium atoms from cysteine and selenocysteine to produce alanine. Functions as a sulfur delivery protein for Fe-S cluster synthesis onto IscU, an Fe-S scaffold assembly protein, as well as other S acceptor proteins. Also functions as a selenium delivery protein in the pathway for the biosynthesis of selenophosphate. The chain is Cysteine desulfurase IscS from Salmonella paratyphi C (strain RKS4594).